The following is a 158-amino-acid chain: Transcription factor BTF3 homolog 4 (158 aa).

The 66-residue stretch at threonine 33–leucine 98 folds into the NAC-A/B domain. Positions leucine 125 to asparagine 158 are disordered. Acidic residues predominate over residues aspartate 134–aspartate 150.

It belongs to the NAC-beta family.

The polypeptide is Transcription factor BTF3 homolog 4 (btf3l4) (Danio rerio (Zebrafish)).